Consider the following 216-residue polypeptide: LexA repressor 1 (216 aa).

Residues 38–58 constitute a DNA-binding region (H-T-H motif); sequence TRQIGAAVGLRSMSSVARHLR. Catalysis depends on for autocatalytic cleavage activity residues Ser-140 and Lys-177.

It belongs to the peptidase S24 family. In terms of assembly, homodimer.

It catalyses the reaction Hydrolysis of Ala-|-Gly bond in repressor LexA.. Represses a number of genes involved in the response to DNA damage (SOS response), including recA and lexA. In the presence of single-stranded DNA, RecA interacts with LexA causing an autocatalytic cleavage which disrupts the DNA-binding part of LexA, leading to derepression of the SOS regulon and eventually DNA repair. The chain is LexA repressor 1 from Nocardia farcinica (strain IFM 10152).